Consider the following 236-residue polypeptide: Ribonuclease 3 (236 aa).

One can recognise an RNase III domain in the interval 13–138 (TEKVFKISGY…LIGAIYVDGG (126 aa)). Glutamate 51 provides a ligand contact to Mg(2+). Residue aspartate 55 is part of the active site. Asparagine 124 and glutamate 127 together coordinate Mg(2+). The active site involves glutamate 127. Positions 164–232 (DAKTALQEWA…AKLMLEKVTK (69 aa)) constitute a DRBM domain.

It belongs to the ribonuclease III family. As to quaternary structure, homodimer. The cofactor is Mg(2+).

The protein localises to the cytoplasm. It catalyses the reaction Endonucleolytic cleavage to 5'-phosphomonoester.. Its function is as follows. Digests double-stranded RNA. Involved in the processing of primary rRNA transcript to yield the immediate precursors to the large and small rRNAs (23S and 16S). Processes some mRNAs, and tRNAs when they are encoded in the rRNA operon. Processes pre-crRNA and tracrRNA of type II CRISPR loci if present in the organism. The protein is Ribonuclease 3 of Anaplasma phagocytophilum (strain HZ).